Consider the following 295-residue polypeptide: N-acetylmuramic acid 6-phosphate etherase (295 aa).

The 164-residue stretch at 55 to 218 (AADALKQGGR…STGAMVKLGK (164 aa)) folds into the SIS domain. Glu-83 acts as the Proton donor in catalysis. Glu-114 is an active-site residue.

It belongs to the GCKR-like family. MurNAc-6-P etherase subfamily. In terms of assembly, homodimer.

The enzyme catalyses N-acetyl-D-muramate 6-phosphate + H2O = N-acetyl-D-glucosamine 6-phosphate + (R)-lactate. It participates in amino-sugar metabolism; 1,6-anhydro-N-acetylmuramate degradation. It functions in the pathway amino-sugar metabolism; N-acetylmuramate degradation. Its pathway is cell wall biogenesis; peptidoglycan recycling. In terms of biological role, specifically catalyzes the cleavage of the D-lactyl ether substituent of MurNAc 6-phosphate, producing GlcNAc 6-phosphate and D-lactate. Together with AnmK, is also required for the utilization of anhydro-N-acetylmuramic acid (anhMurNAc) either imported from the medium or derived from its own cell wall murein, and thus plays a role in cell wall recycling. The polypeptide is N-acetylmuramic acid 6-phosphate etherase (Yersinia pseudotuberculosis serotype O:1b (strain IP 31758)).